Reading from the N-terminus, the 255-residue chain is Phosphoribosylformylglycinamidine synthase subunit PurQ (255 aa).

The Glutamine amidotransferase type-1 domain occupies 6–255; it reads TLILRTPGTN…TNAVKWARQV (250 aa). Cys-96 (nucleophile) is an active-site residue. Catalysis depends on residues His-217 and Glu-219.

Part of the FGAM synthase complex composed of 1 PurL, 1 PurQ and 2 PurS subunits.

The protein localises to the cytoplasm. It carries out the reaction N(2)-formyl-N(1)-(5-phospho-beta-D-ribosyl)glycinamide + L-glutamine + ATP + H2O = 2-formamido-N(1)-(5-O-phospho-beta-D-ribosyl)acetamidine + L-glutamate + ADP + phosphate + H(+). The catalysed reaction is L-glutamine + H2O = L-glutamate + NH4(+). It functions in the pathway purine metabolism; IMP biosynthesis via de novo pathway; 5-amino-1-(5-phospho-D-ribosyl)imidazole from N(2)-formyl-N(1)-(5-phospho-D-ribosyl)glycinamide: step 1/2. Part of the phosphoribosylformylglycinamidine synthase complex involved in the purines biosynthetic pathway. Catalyzes the ATP-dependent conversion of formylglycinamide ribonucleotide (FGAR) and glutamine to yield formylglycinamidine ribonucleotide (FGAM) and glutamate. The FGAM synthase complex is composed of three subunits. PurQ produces an ammonia molecule by converting glutamine to glutamate. PurL transfers the ammonia molecule to FGAR to form FGAM in an ATP-dependent manner. PurS interacts with PurQ and PurL and is thought to assist in the transfer of the ammonia molecule from PurQ to PurL. This is Phosphoribosylformylglycinamidine synthase subunit PurQ from Dehalococcoides mccartyi (strain ATCC BAA-2266 / KCTC 15142 / 195) (Dehalococcoides ethenogenes (strain 195)).